We begin with the raw amino-acid sequence, 1063 residues long: Unconventional myosin-Ic (1063 aa).

N-acetylmethionine is present on M1. One can recognise a Myosin motor domain in the interval 47 to 731 (GVQDFVLLEN…TLFATEDALE (685 aa)). ATP is bound by residues N88, Y96, 139–148 (SGESGAGKTE), and 192–196 (NDNSS). At K383 the chain carries N6-methyllysine. S408 carries the post-translational modification Phosphoserine. Position 486 is an N6-acetyllysine (K486). At S536 the chain carries Phosphoserine. Residues 608–630 (LLELVEILKSKEPAYVRCIKPND) are actin-binding. IQ domains follow at residues 734-757 (RQSL…FLRV) and 758-786 (KRSA…AAQT). Phosphoserine occurs at positions 864 and 1041. One can recognise a TH1 domain in the interval 885-1059 (KDNYPQSVPR…NGHLAVVAPR (175 aa)).

Belongs to the TRAFAC class myosin-kinesin ATPase superfamily. Myosin family. Interacts (via its IQ motifs) with CABP1 and CIB1; the interaction with CABP1 and CIB1 is calcium-dependent. Interacts (via tail domain) with PLEKHB1 (via PH domain); the interaction is not affected by the presence or absence of calcium and CALM. Interacts with POLR1A. Interacts with POLR2A. Component of the B-WICH complex, at least composed of SMARCA5/SNF2H, BAZ1B/WSTF, SF3B1, DEK, MYO1C, ERCC6, MYBBP1A and DDX21. Interacts (via its IQ motifs) with CALM; this precludes interaction with YWHAB. Interacts with YWHAB; this precludes interaction with CALM. Interacts with RPS6. Interacts with actin. Interacts with LLPH. Interacts with GLUT4. Interacts (via its IQ motifs) with SH3BGRL3; the interaction is dependent on calcium and takes place at membrane ruffles. In terms of processing, isoform 2 contains a N-acetylmethionine at position 1. In terms of tissue distribution, widely expressed.

The protein localises to the cytoplasm. It is found in the nucleus. It localises to the cell cortex. Its subcellular location is the cell projection. The protein resides in the ruffle membrane. The protein localises to the cytoplasmic vesicle. It is found in the stereocilium membrane. It localises to the nucleolus. Its subcellular location is the nucleoplasm. In terms of biological role, myosins are actin-based motor molecules with ATPase activity. Unconventional myosins serve in intracellular movements. Their highly divergent tails are presumed to bind to membranous compartments, which would be moved relative to actin filaments. Involved in glucose transporter recycling in response to insulin by regulating movement of intracellular GLUT4-containing vesicles to the plasma membrane. Component of the hair cell's (the sensory cells of the inner ear) adaptation-motor complex. Acts as a mediator of adaptation of mechanoelectrical transduction in stereocilia of vestibular hair cells. Binds phosphoinositides and links the actin cytoskeleton to cellular membranes. Isoform 3 is involved in regulation of transcription. Associated with transcriptional active ribosomal genes. Appears to cooperate with the WICH chromatin-remodeling complex to facilitate transcription. Necessary for the formation of the first phosphodiester bond during transcription initiation. This is Unconventional myosin-Ic (MYO1C) from Bos taurus (Bovine).